Consider the following 141-residue polypeptide: MSSRTIMAFDFGTKSIGSAIGQEITGTASPLKAFKAQDGTPNWDDIEKQIKEWQPDLIVVGLPTDLHGKELDVITPKAKKFANRLHGRFGNQVELHDERLSTVEARADLFEFGGYKALSKGNVDCQSAVVILESWFESQWG.

Belongs to the YqgF nuclease family.

Its subcellular location is the cytoplasm. Functionally, could be a nuclease involved in processing of the 5'-end of pre-16S rRNA. The chain is Putative pre-16S rRNA nuclease from Aliivibrio salmonicida (strain LFI1238) (Vibrio salmonicida (strain LFI1238)).